Consider the following 470-residue polypeptide: MSNSITLTLKNYLGRMPTINEYHMLKSQVRNIQKIMFFNKDIFISLIKKNKKKFFSEIKSSPSEIKTHILEYFLKQQKTSSIGKLYTIIELQTILVSSYTDVLGVLTTKSPYVFPSNIKYEPHSMKKIAHDILTSINVATISEKVMGRHNVSNLVTNVNLLMEEYLRRHNKSCICYGSYSLYLLNPSIKYGDIDILQTNSRIFLINLAFLIKFITGHNVMLLKVPYLKNYMVLRDNEDKHIIDSFNVRQETMHAIPKILIDNIYIVDPTFQLLSMIKMFSQIDRLEDLAKNQEKATIKLATLLEYVRIKHGIILNGNVTNMPMPASFNYEKRIVTVDASKYNFSFKKCFVYLDENSLSSDILDLNADDAIDFENVSNSVFLINDEVMYTYFSNTILMSSKNEIHEISARGVSAHILMYQILTDGDFLIPLSDIINSLMFKEKTPIFNIIPRDKKTGKHGIINIEKDIITH.

Catalysis depends on residues aspartate 192 and aspartate 194.

It belongs to the poxviridae poly(A) polymerase catalytic subunit family. In terms of assembly, heterodimer of a large (catalytic) subunit and a small (regulatory) subunit.

It carries out the reaction RNA(n) + ATP = RNA(n)-3'-adenine ribonucleotide + diphosphate. In terms of biological role, polymerase that creates the 3'-poly(A) tail of mRNA's. This chain is Poly(A) polymerase catalytic subunit (PAPL), found in Homo sapiens (Human).